A 331-amino-acid chain; its full sequence is XylDLEGF operon transcriptional activator 3 (331 aa).

The HTH araC/xylS-type domain maps to 214–315 (ERVVQFIEDN…GELPSDTLRR (102 aa)). 2 consecutive DNA-binding regions (H-T-H motif) follow at residues 231–252 (ERLA…EKHA) and 282–305 (VTEM…RSTF).

It localises to the cytoplasm. Regulatory protein of the TOL plasmid xyl operons. XylS activates the xylXYZLTEGFJQKIH operon required for the degradation of toluene, m-xylene and p-xylene. This Pseudomonas putida (Arthrobacter siderocapsulatus) protein is XylDLEGF operon transcriptional activator 3 (xylS3).